The following is a 2273-amino-acid chain: Acetyl-CoA carboxylase, mitochondrial (2273 aa).

A mitochondrion-targeting transit peptide spans 1–104 (KGKTITHGQS…RGNIHKHTRL (104 aa)). One can recognise a Biotin carboxylation domain in the interval 134–635 (VISKILIANN…STGWLDDLIL (502 aa)). An ATP-grasp domain is found at 292 to 484 (KTNFVSVPDD…LPATQLQIAM (193 aa)). 332 to 337 (GGGGKG) lines the ATP pocket. The active site involves R459. The 75-residue stretch at 763 to 837 (LEAELNPTQV…EAGDVIAKLT (75 aa)) folds into the Biotinyl-binding domain. K804 carries the post-translational modification N6-biotinyllysine. In terms of domain architecture, CoA carboxyltransferase N-terminal spans 1532 to 1867 (PYSVKDWLQP…KRDMSPPLLE (336 aa)). Residues 1532-2187 (PYSVKDWLQP…EGQVIKRLQK (656 aa)) form a carboxyltransferase region. CoA-binding residues include R1776, K2080, and R2082. In terms of domain architecture, CoA carboxyltransferase C-terminal spans 1871 to 2187 (RWDRDVDFKP…EGQVIKRLQK (317 aa)).

The cofactor is biotin.

It is found in the mitochondrion. It catalyses the reaction hydrogencarbonate + acetyl-CoA + ATP = malonyl-CoA + ADP + phosphate + H(+). The catalysed reaction is N(6)-biotinyl-L-lysyl-[protein] + hydrogencarbonate + ATP = N(6)-carboxybiotinyl-L-lysyl-[protein] + ADP + phosphate + H(+). Its pathway is lipid metabolism; malonyl-CoA biosynthesis; malonyl-CoA from acetyl-CoA: step 1/1. Catalyzes the rate-limiting reaction in the mitochondrial fatty acid synthesis (FAS) type II pathway. Responsible for the production of the mitochondrial malonyl-CoA, used for the biosynthesis of the cofactor lipoic acid. This protein carries three functions: biotin carboxyl carrier protein, biotin carboxylase, and carboxyltransferase. This chain is Acetyl-CoA carboxylase, mitochondrial (HFA1), found in Saccharomyces cerevisiae (strain ATCC 204508 / S288c) (Baker's yeast).